The sequence spans 375 residues: Queuine tRNA-ribosyltransferase (375 aa).

Aspartate 93 functions as the Proton acceptor in the catalytic mechanism. Residues aspartate 93–phenylalanine 97, aspartate 147, glutamine 191, and glycine 218 each bind substrate. Residues glycine 249–aspartate 255 are RNA binding. The active-site Nucleophile is the aspartate 268. Residues threonine 273–arginine 277 form an RNA binding; important for wobble base 34 recognition region. Cysteine 306, cysteine 308, cysteine 311, and histidine 337 together coordinate Zn(2+).

The protein belongs to the queuine tRNA-ribosyltransferase family. Homodimer. Within each dimer, one monomer is responsible for RNA recognition and catalysis, while the other monomer binds to the replacement base PreQ1. The cofactor is Zn(2+).

The catalysed reaction is 7-aminomethyl-7-carbaguanine + guanosine(34) in tRNA = 7-aminomethyl-7-carbaguanosine(34) in tRNA + guanine. It participates in tRNA modification; tRNA-queuosine biosynthesis. In terms of biological role, catalyzes the base-exchange of a guanine (G) residue with the queuine precursor 7-aminomethyl-7-deazaguanine (PreQ1) at position 34 (anticodon wobble position) in tRNAs with GU(N) anticodons (tRNA-Asp, -Asn, -His and -Tyr). Catalysis occurs through a double-displacement mechanism. The nucleophile active site attacks the C1' of nucleotide 34 to detach the guanine base from the RNA, forming a covalent enzyme-RNA intermediate. The proton acceptor active site deprotonates the incoming PreQ1, allowing a nucleophilic attack on the C1' of the ribose to form the product. After dissociation, two additional enzymatic reactions on the tRNA convert PreQ1 to queuine (Q), resulting in the hypermodified nucleoside queuosine (7-(((4,5-cis-dihydroxy-2-cyclopenten-1-yl)amino)methyl)-7-deazaguanosine). This chain is Queuine tRNA-ribosyltransferase, found in Nitratidesulfovibrio vulgaris (strain DP4) (Desulfovibrio vulgaris).